A 227-amino-acid polypeptide reads, in one-letter code: MAMSFFDQFASPSYLGIPLIAIAIALPWVLFPLPSLRWVNNRLITIQGWLINRFTNQLMLPLNTGGHKWALLLASLMVFLITINMLGLLPYTFTPTTQLSLNMGLAIPLWLATVIIGLRNQPTVALGDLLPEGTPLPLIPVLIIIETISLFIRPLALGVRLTANLTAGHLLIQLIATAVFVLLPMMPTVAILTATVLFLLTLLEVAVAMIQAYVFVLLLSLYLQENV.

A run of 6 helical transmembrane segments spans residues 14-34, 69-89, 98-118, 132-152, 179-199, and 202-222; these read YLGI…FPLP, WALL…LGLL, QLSL…IIGL, EGTP…SLFI, VFVL…VLFL, and LLEV…LSLY.

It belongs to the ATPase A chain family. As to quaternary structure, component of the ATP synthase complex composed at least of ATP5F1A/subunit alpha, ATP5F1B/subunit beta, ATP5MC1/subunit c (homooctomer), MT-ATP6/subunit a, MT-ATP8/subunit 8, ATP5ME/subunit e, ATP5MF/subunit f, ATP5MG/subunit g, ATP5MK/subunit k, ATP5MJ/subunit j, ATP5F1C/subunit gamma, ATP5F1D/subunit delta, ATP5F1E/subunit epsilon, ATP5PF/subunit F6, ATP5PB/subunit b, ATP5PD/subunit d, ATP5PO/subunit OSCP. ATP synthase complex consists of a soluble F(1) head domain (subunits alpha(3) and beta(3)) - the catalytic core - and a membrane F(0) domain - the membrane proton channel (subunits c, a, 8, e, f, g, k and j). These two domains are linked by a central stalk (subunits gamma, delta, and epsilon) rotating inside the F1 region and a stationary peripheral stalk (subunits F6, b, d, and OSCP). Interacts with DNAJC30; interaction is direct.

The protein localises to the mitochondrion inner membrane. It carries out the reaction H(+)(in) = H(+)(out). Subunit a, of the mitochondrial membrane ATP synthase complex (F(1)F(0) ATP synthase or Complex V) that produces ATP from ADP in the presence of a proton gradient across the membrane which is generated by electron transport complexes of the respiratory chain. ATP synthase complex consist of a soluble F(1) head domain - the catalytic core - and a membrane F(1) domain - the membrane proton channel. These two domains are linked by a central stalk rotating inside the F(1) region and a stationary peripheral stalk. During catalysis, ATP synthesis in the catalytic domain of F(1) is coupled via a rotary mechanism of the central stalk subunits to proton translocation. With the subunit c (ATP5MC1), forms the proton-conducting channel in the F(0) domain, that contains two crucial half-channels (inlet and outlet) that facilitate proton movement from the mitochondrial intermembrane space (IMS) into the matrix. Protons are taken up via the inlet half-channel and released through the outlet half-channel, following a Grotthuss mechanism. The chain is ATP synthase F(0) complex subunit a from Formosania lacustris (Oriental stream loach).